Consider the following 138-residue polypeptide: Basic phospholipase A2 chain HDP-1P (138 aa).

A signal peptide spans 1-16 (MRILWIVAVCLIGVEG). 7 disulfides stabilise this stretch: Cys-42-Cys-131, Cys-44-Cys-60, Cys-59-Cys-111, Cys-65-Cys-138, Cys-66-Cys-104, Cys-73-Cys-97, and Cys-91-Cys-102. Tyr-43, Gly-45, and Gly-47 together coordinate Ca(2+). Residue His-63 is part of the active site. Residue Asp-64 coordinates Ca(2+). The active site involves Asp-105.

In terms of assembly, heterodimer; non-covalently linked. The toxic basic protein has phospholipase A2 activity (chain HDP-1P) and the non-toxic acidic protein functions as its inhibitor (chain HPD-1I (AC A4VBF0)). Ca(2+) is required as a cofactor. In terms of tissue distribution, expressed by the venom gland.

It is found in the secreted. It catalyses the reaction a 1,2-diacyl-sn-glycero-3-phosphocholine + H2O = a 1-acyl-sn-glycero-3-phosphocholine + a fatty acid + H(+). Its activity is regulated as follows. Enzymatic activity and neurotoxicity are inhibited by Triton X-100, which has been determined to be located in the center of the hydrophobic channel of the enzyme. Functionally, heterodimer: shows the same activities as the monomer, but with a lower potency. In terms of biological role, monomer: snake venom phospholipase A2 (PLA2) that shows presynaptic neurotoxicity, anticoagulant activity and that weakly inhibits ADP-induced platelet aggregation. Inhibits exocytosis in pancreatic beta cells, confirming it can act presynaptically in inhibiting the exocytosis of neurotransmitters in neurons. PLA2 catalyzes the calcium-dependent hydrolysis of the 2-acyl groups in 3-sn-phosphoglycerides. The chain is Basic phospholipase A2 chain HDP-1P from Vipera nikolskii (Nikolsky's adder).